Consider the following 504-residue polypeptide: AMP phosphorylase 1 (504 aa).

Residues G169, 195 to 200, and T204 each bind AMP; that span reads SRAITS. The active-site Proton donor is D257. Residues S265 and K289 each contribute to the AMP site.

The protein belongs to the thymidine/pyrimidine-nucleoside phosphorylase family. Type 2 subfamily.

The enzyme catalyses AMP + phosphate = alpha-D-ribose 1,5-bisphosphate + adenine. The catalysed reaction is CMP + phosphate = cytosine + alpha-D-ribose 1,5-bisphosphate. It carries out the reaction UMP + phosphate = alpha-D-ribose 1,5-bisphosphate + uracil. In terms of biological role, catalyzes the conversion of AMP and phosphate to adenine and ribose 1,5-bisphosphate (R15P). Exhibits phosphorylase activity toward CMP and UMP in addition to AMP. Functions in an archaeal AMP degradation pathway, together with R15P isomerase and RubisCO. The sequence is that of AMP phosphorylase 1 from Archaeoglobus fulgidus (strain ATCC 49558 / DSM 4304 / JCM 9628 / NBRC 100126 / VC-16).